We begin with the raw amino-acid sequence, 511 residues long: Lysine--tRNA ligase (511 aa).

Residues Glu421 and Glu428 each contribute to the Mg(2+) site.

The protein belongs to the class-II aminoacyl-tRNA synthetase family. As to quaternary structure, homodimer. Mg(2+) serves as cofactor.

The protein resides in the cytoplasm. The enzyme catalyses tRNA(Lys) + L-lysine + ATP = L-lysyl-tRNA(Lys) + AMP + diphosphate. This is Lysine--tRNA ligase from Janthinobacterium sp. (strain Marseille) (Minibacterium massiliensis).